Here is a 61-residue protein sequence, read N- to C-terminus: Temporin-ALj (61 aa).

A signal peptide spans 1–22 (MFTLKKSLLLLFFLATINLSFC). Residues 23-46 (EQERNAEEERRDEPDERNAEVEKR) constitute a propeptide that is removed on maturation. Leucine 59 bears the Leucine amide mark.

This sequence belongs to the frog skin active peptide (FSAP) family. Temporin subfamily. As to expression, expressed by the skin glands.

It is found in the secreted. In terms of biological role, antimicrobial peptide with activity against Gram-positive and Gram-negative bacteria and against fungi. Has been tested against S.aureus (MIC=7.5 ug/mL), B.pumilus (MIC=15.0 ug/mL), B.cereus (MIC=75.0 ug/mL), E.coli (MIC=15.0 ug/mL), B.dysenteriae (MIC=30.0 ug/mL), A.cacoaceticus (MIC=60.0 ug/mL), P.aeruginosa (MIC=7.5 ug/mL) and C.albicans (MIC=5.0 ug/mL). Also shows a weak hemolytic activity. This Amolops loloensis (Lolokou Sucker Frog) protein is Temporin-ALj.